A 708-amino-acid polypeptide reads, in one-letter code: MATTSLDLAKVRNIGIMAHIDAGKTTTTERILFYTGVSYKIGEVHDGAATMDWMEQEQERGITITSAATTCHWPLEDNDYTINIIDTPGHVDFTVEVERSLRVLDGAVTVFDGVAGVEPQSETVWRQADRYGVPRICFVNKLDRTGAEFHRCVDMISDRLGAQPLVMQLPIGAEADFQGVVDLVRMKALVWSADAAKGEMYDVVDIPATHTEAAEEWRGKLVEAVAENDEEVMELFLEGQEPTEEQLYAAIRRVTIASGKSSDTTVTPVFCGTAFKNKGVQPLLDAVVRYLPTPLDVEAIEGHDVKDPEVVVKRKPSEDEPLAALAFKIMSDPHLGKLTFVRVYSGRLVSGTAVLNSVKGRKERIGKIYRMHANKREEIESVGAGDIVAVMGLKQTTTGETLSDDKSPVILESMDFPAPVIQVAIEPKSKGDQEKLGVAIQRLAEEDPSFQVHTNEETGQTIIGGMGELHLEVLVDRMRREFKVEANVGKPQVAYRETIRKTVERVDYTHKKQTGGTGQFAKVQIAIEPIEGGDASYEFVNKVTGGRIPKEYIPSVDAGAQEAMQFGILAGYEMTGVRVTLIDGGYHEVDSSELAFKIAGSQAFKEAARKASPVLLEPMMAVEVTTPEDYMGDVIGDINSRRGQIQAMEERMGARVVKGLVPLSEMFGYVGDLRSKTSGRASYSMQFDSYAEVPRNVAEEIIAKAKGE.

One can recognise a tr-type G domain in the interval 9 to 295 (AKVRNIGIMA…AVVRYLPTPL (287 aa)). Residues 18-25 (AHIDAGKT), 86-90 (DTPGH), and 140-143 (NKLD) each bind GTP.

It belongs to the TRAFAC class translation factor GTPase superfamily. Classic translation factor GTPase family. EF-G/EF-2 subfamily.

The protein localises to the cytoplasm. Catalyzes the GTP-dependent ribosomal translocation step during translation elongation. During this step, the ribosome changes from the pre-translocational (PRE) to the post-translocational (POST) state as the newly formed A-site-bound peptidyl-tRNA and P-site-bound deacylated tRNA move to the P and E sites, respectively. Catalyzes the coordinated movement of the two tRNA molecules, the mRNA and conformational changes in the ribosome. This is Elongation factor G 1 (fusA) from Streptomyces coelicolor (strain ATCC BAA-471 / A3(2) / M145).